A 1197-amino-acid chain; its full sequence is PAN2-PAN3 deadenylation complex catalytic subunit PAN2 (1197 aa).

4 WD repeats span residues Asp153–Thr193, Glu195–Glu231, Val244–Pro280, and Thr328–Thr367. Residues Tyr368–Tyr485 are linker. The 434-residue stretch at Met486 to Arg919 folds into the USP domain. Residues Val970 to Tyr1142 form the Exonuclease domain. Residues Asp973, Glu975, Asp1082, and Asp1134 each coordinate a divalent metal cation. Residues Val1176–Leu1197 form a disordered region.

Belongs to the peptidase C19 family. PAN2 subfamily. As to quaternary structure, forms a heterotrimer with an asymmetric homodimer of the regulatory subunit PAN3 to form the poly(A)-nuclease (PAN) deadenylation complex. The cofactor is a divalent metal cation.

It is found in the cytoplasm. Its subcellular location is the P-body. The protein localises to the nucleus. The enzyme catalyses Exonucleolytic cleavage of poly(A) to 5'-AMP.. With respect to regulation, positively regulated by the regulatory subunit PAN3. Functionally, catalytic subunit of the poly(A)-nuclease (PAN) deadenylation complex, one of two cytoplasmic mRNA deadenylases involved in general and miRNA-mediated mRNA turnover. PAN specifically shortens poly(A) tails of RNA and the activity is stimulated by poly(A)-binding protein (PABP). PAN deadenylation is followed by rapid degradation of the shortened mRNA tails by the CCR4-NOT complex. Deadenylated mRNAs are then degraded by two alternative mechanisms, namely exosome-mediated 3'-5' exonucleolytic degradation, or deadenylation-dependent mRNA decaping and subsequent 5'-3' exonucleolytic degradation by XRN1. This is PAN2-PAN3 deadenylation complex catalytic subunit PAN2 from Gallus gallus (Chicken).